Reading from the N-terminus, the 1432-residue chain is ABC transporter asL7 (1432 aa).

The span at 1-20 shows a compositional bias: polar residues; that stretch reads MFDTTKLQSSTQDGSTSSVT. The disordered stretch occupies residues 1–36; that stretch reads MFDTTKLQSSTQDGSTSSVTGEPIFGANDPNSELNP. One can recognise an ABC transporter 1 domain in the interval 91–341; that stretch reads LALPGMLIRN…FERLGFECPS (251 aa). A glycan (N-linked (GlcNAc...) asparagine) is linked at asparagine 265. 6 consecutive transmembrane segments (helical) span residues 450–470, 484–504, 530–550, 559–579, 597–617, and 702–722; these read PTIV…SLFF, VVLF…VMTL, VLMD…VFYF, GNFF…SGIF, MIPA…MVPI, and IGIV…TSEY. The ABC transporter 2 domain maps to 786–1029; sequence FHWRNVCYDI…TLVEYFERKA (244 aa). Residue 822–829 participates in ATP binding; that stretch reads GVSGAGKT. The N-linked (GlcNAc...) asparagine glycan is linked to asparagine 1017. Residues 1076 to 1095 are disordered; sequence LSRLREHGSQSNSHDSEKSE. The next 6 helical transmembrane spans lie at 1135 to 1155, 1166 to 1186, 1215 to 1235, 1251 to 1271, 1279 to 1299, and 1317 to 1337; these read FALC…SPLS, VFQL…QFII, IPYY…PIGL, LMWL…HFCI, AGAN…GALI, and LSYL…VTCA. Residue asparagine 1371 is glycosylated (N-linked (GlcNAc...) asparagine). A helical membrane pass occupies residues 1402–1422; sequence FGIIWVYVIFNISAAITLYWV.

The protein belongs to the ABC transporter superfamily. ABCG family. PDR (TC 3.A.1.205) subfamily.

The protein resides in the cell membrane. Its function is as follows. ABC transporter; part of the gene cluster that mediates the biosynthesis of xenovulene A, an unusual meroterpenoid that has potent inhibitory effects on the human gamma-aminobutyrate A (GABAA) benzodiazepine receptor. The protein is ABC transporter asL7 of Sarocladium schorii (Acremonium strictum (strain IMI 501407)).